Reading from the N-terminus, the 602-residue chain is Arginine--tRNA ligase (602 aa).

The 'HIGH' region motif lies at 132–142 (ANPTGPLHVGH).

It belongs to the class-I aminoacyl-tRNA synthetase family. As to quaternary structure, monomer.

Its subcellular location is the cytoplasm. The enzyme catalyses tRNA(Arg) + L-arginine + ATP = L-arginyl-tRNA(Arg) + AMP + diphosphate. The chain is Arginine--tRNA ligase from Cupriavidus metallidurans (strain ATCC 43123 / DSM 2839 / NBRC 102507 / CH34) (Ralstonia metallidurans).